The chain runs to 344 residues: L-rhamnose-proton symporter (344 aa).

10 consecutive transmembrane segments (helical) span residues 4–24, 38–58, 68–88, 101–121, 137–157, 175–195, 207–227, 255–275, 290–310, and 324–344; these read PILL…CFYA, WSLG…WWLL, FDMA…IGNI, MGIG…TPVL, TLLG…AGLL, LILA…MDAA, INAL…GAVV, LIAN…QFFF, ISWM…GLLF, and LVLG…GMAA.

This sequence belongs to the L-rhamnose transporter (TC 2.A.7.6) family.

The protein resides in the cell inner membrane. It catalyses the reaction L-rhamnopyranose(in) + H(+)(in) = L-rhamnopyranose(out) + H(+)(out). Functionally, uptake of L-rhamnose across the cytoplasmic membrane with the concomitant transport of protons into the cell (symport system). This Pectobacterium carotovorum subsp. carotovorum (strain PC1) protein is L-rhamnose-proton symporter.